The sequence spans 216 residues: Pyridoxine/pyridoxamine 5'-phosphate oxidase (216 aa).

Substrate is bound by residues 9-12 (RLSY) and Arg-67. Residues 62–67 (RIVLLR), 77–78 (YT), Lys-84, and Gln-106 each bind FMN. 3 residues coordinate substrate: Tyr-124, Arg-128, and Ser-132. FMN contacts are provided by residues 142–143 (QS) and Trp-188. A substrate-binding site is contributed by 194 to 196 (RMH). Arg-198 serves as a coordination point for FMN.

The protein belongs to the pyridoxamine 5'-phosphate oxidase family. As to quaternary structure, homodimer. It depends on FMN as a cofactor.

It carries out the reaction pyridoxamine 5'-phosphate + O2 + H2O = pyridoxal 5'-phosphate + H2O2 + NH4(+). The catalysed reaction is pyridoxine 5'-phosphate + O2 = pyridoxal 5'-phosphate + H2O2. Its pathway is cofactor metabolism; pyridoxal 5'-phosphate salvage; pyridoxal 5'-phosphate from pyridoxamine 5'-phosphate: step 1/1. It participates in cofactor metabolism; pyridoxal 5'-phosphate salvage; pyridoxal 5'-phosphate from pyridoxine 5'-phosphate: step 1/1. In terms of biological role, catalyzes the oxidation of either pyridoxine 5'-phosphate (PNP) or pyridoxamine 5'-phosphate (PMP) into pyridoxal 5'-phosphate (PLP). The sequence is that of Pyridoxine/pyridoxamine 5'-phosphate oxidase from Psychrobacter cryohalolentis (strain ATCC BAA-1226 / DSM 17306 / VKM B-2378 / K5).